Consider the following 151-residue polypeptide: Large ribosomal subunit protein bL9 (151 aa).

It belongs to the bacterial ribosomal protein bL9 family.

Its function is as follows. Binds to the 23S rRNA. This is Large ribosomal subunit protein bL9 from Francisella tularensis subsp. novicida (strain U112).